The following is a 151-amino-acid chain: Large ribosomal subunit protein bL9 (151 aa).

Belongs to the bacterial ribosomal protein bL9 family.

Functionally, binds to the 23S rRNA. The sequence is that of Large ribosomal subunit protein bL9 from Francisella tularensis subsp. tularensis (strain FSC 198).